The sequence spans 339 residues: Glycerol-3-phosphate dehydrogenase [NAD(P)+] (339 aa).

Residues Ser-15, Tyr-16, His-36, and Lys-110 each contribute to the NADPH site. Sn-glycerol 3-phosphate-binding residues include Lys-110, Gly-139, and Thr-141. Residue Ala-143 coordinates NADPH. Sn-glycerol 3-phosphate-binding residues include Lys-195, Asp-248, Ser-258, Arg-259, and Asn-260. Lys-195 serves as the catalytic Proton acceptor. Arg-259 serves as a coordination point for NADPH. NADPH contacts are provided by Val-283 and Glu-285.

This sequence belongs to the NAD-dependent glycerol-3-phosphate dehydrogenase family.

Its subcellular location is the cytoplasm. It catalyses the reaction sn-glycerol 3-phosphate + NAD(+) = dihydroxyacetone phosphate + NADH + H(+). The enzyme catalyses sn-glycerol 3-phosphate + NADP(+) = dihydroxyacetone phosphate + NADPH + H(+). It functions in the pathway membrane lipid metabolism; glycerophospholipid metabolism. In terms of biological role, catalyzes the reduction of the glycolytic intermediate dihydroxyacetone phosphate (DHAP) to sn-glycerol 3-phosphate (G3P), the key precursor for phospholipid synthesis. The protein is Glycerol-3-phosphate dehydrogenase [NAD(P)+] of Yersinia pseudotuberculosis serotype O:1b (strain IP 31758).